The chain runs to 61 residues: UPF0434 protein Pmen_1615 (61 aa).

This sequence belongs to the UPF0434 family.

This Ectopseudomonas mendocina (strain ymp) (Pseudomonas mendocina) protein is UPF0434 protein Pmen_1615.